We begin with the raw amino-acid sequence, 124 residues long: Large ribosomal subunit protein bL20c (124 aa).

It belongs to the bacterial ribosomal protein bL20 family.

The protein localises to the plastid. It localises to the chloroplast. In terms of biological role, binds directly to 23S ribosomal RNA and is necessary for the in vitro assembly process of the 50S ribosomal subunit. It is not involved in the protein synthesizing functions of that subunit. The protein is Large ribosomal subunit protein bL20c (rpl20) of Euglena gracilis.